We begin with the raw amino-acid sequence, 187 residues long: HTH-type transcriptional regulator NfxB (187 aa).

The H-T-H motif DNA-binding region spans 26–45 (LKELAEAAGVSKATLHRFCG).

Confers resistance to guinolones. May negatively regulate the expression of genes that are associated with cell permeability to drugs. The protein is HTH-type transcriptional regulator NfxB (nfxB) of Pseudomonas aeruginosa (strain ATCC 15692 / DSM 22644 / CIP 104116 / JCM 14847 / LMG 12228 / 1C / PRS 101 / PAO1).